The sequence spans 898 residues: Protein translocase subunit SecA (898 aa).

Residues Gln87, 105-109 (GEGKT), and Asp512 each bind ATP. Polar residues predominate over residues 855–865 (MQYQNNEGTSS). The segment at 855 to 898 (MQYQNNEGTSSLHEKSEHKIGRNESCPCGSGKKYKHCHGSKAKY) is disordered. Residues 866 to 876 (LHEKSEHKIGR) are compositionally biased toward basic and acidic residues. Zn(2+) is bound by residues Cys880, Cys882, Cys891, and His892. A compositionally biased stretch (basic residues) spans 886–898 (KKYKHCHGSKAKY).

It belongs to the SecA family. As to quaternary structure, monomer and homodimer. Part of the essential Sec protein translocation apparatus which comprises SecA, SecYEG and auxiliary proteins SecDF-YajC and YidC. The cofactor is Zn(2+).

The protein resides in the cell inner membrane. Its subcellular location is the cytoplasm. The catalysed reaction is ATP + H2O + cellular proteinSide 1 = ADP + phosphate + cellular proteinSide 2.. Part of the Sec protein translocase complex. Interacts with the SecYEG preprotein conducting channel. Has a central role in coupling the hydrolysis of ATP to the transfer of proteins into and across the cell membrane, serving both as a receptor for the preprotein-SecB complex and as an ATP-driven molecular motor driving the stepwise translocation of polypeptide chains across the membrane. The sequence is that of Protein translocase subunit SecA from Histophilus somni (strain 129Pt) (Haemophilus somnus).